The primary structure comprises 59 residues: Large ribosomal subunit protein bL32 (59 aa).

Residues 1-20 (MAVPRNRHSNARKNIRRSHH) are disordered.

The protein belongs to the bacterial ribosomal protein bL32 family.

The polypeptide is Large ribosomal subunit protein bL32 (Chlamydia trachomatis serovar A (strain ATCC VR-571B / DSM 19440 / HAR-13)).